The following is a 676-amino-acid chain: Maternal embryonic leucine zipper kinase (676 aa).

One can recognise a Protein kinase domain in the interval 13-265; the sequence is YEVYETIGSG…VKHLLDHPWV (253 aa). Residues 19 to 27 and Lys42 contribute to the ATP site; that span reads IGSGGFAKV. Asp134 serves as the catalytic Proton acceptor. A Phosphothreonine; by autocatalysis modification is found at Thr169. The residue at position 173 (Ser173) is a Phosphoserine; by autocatalysis. Residues 284–323 form a UBA-like region; the sequence is IDEDCITEMAVTFKQSKQRTIQLVSEWKYDQITATYLLLL. The autoinhibitory region stretch occupies residues 328–673; that stretch reads QGRPVRLRAE…VEDILSSSSQ (346 aa). Residues 423–443 show a composition bias toward basic and acidic residues; that stretch reads EHSRPCRQKPERRERTKENKE. Residues 423 to 518 form a disordered region; it reads EHSRPCRQKP…QQNGQQGELN (96 aa). A compositionally biased stretch (polar residues) spans 462–489; the sequence is TPTSSRKVKSNRTVMTTPNHNNNKSSEV. The segment covering 508-518 has biased composition (low complexity); that stretch reads QQQNGQQGELN. The KA1 domain occupies 624–673; the sequence is SDFGKVTMQFELEVCLLQKPEVVGIRRQRLKGDAWVYKHLVEDILSSSSQ.

It belongs to the protein kinase superfamily. CAMK Ser/Thr protein kinase family. SNF1 subfamily. Autophosphorylated: autophosphorylation of the T-loop at Thr-169 and Ser-173 is required for activation. Strongly expressed in the eye, gill, kidney, spleen, muscle, ovary and testis and weakly in the heart, liver, and gut. Expressed in the brain and lateral mesoderm at 12 hours post-fertilization (hpf).

The protein resides in the cell membrane. It carries out the reaction L-seryl-[protein] + ATP = O-phospho-L-seryl-[protein] + ADP + H(+). The enzyme catalyses L-threonyl-[protein] + ATP = O-phospho-L-threonyl-[protein] + ADP + H(+). Activated by autophosphorylation of the T-loop at Thr-169 and Ser-173: in contrast to other members of the SNF1 subfamily, phosphorylation at Thr-169 is not mediated by STK11/LKB1 but via autophosphorylation instead. Its function is as follows. Serine/threonine-protein kinase involved in various processes such as cell cycle regulation, self-renewal of stem cells, apoptosis and splicing regulation. Also plays a role in primitive hematopoiesis, possibly by affecting the expression of genes critical for hematopoiesis. This Danio rerio (Zebrafish) protein is Maternal embryonic leucine zipper kinase (melk).